Consider the following 461-residue polypeptide: Alpha-tubulin N-acetyltransferase 1 (461 aa).

An N-acetyltransferase domain is found at 2-189 (VEFRFDIKPL…NNFVLYEGFF (188 aa)). Residues 123 to 136 (FYVHESRQRAGLGK) and 159 to 168 (SEKLLSFLSK) contribute to the acetyl-CoA site. Disordered stretches follow at residues 196 to 295 (NGGG…GNHD), 314 to 362 (NSYE…PEVA), and 418 to 443 (RPPGHEVTSPGQDNTDAMSTVSSGGG). The span at 233-254 (RRGSQQQTTPNARLQQITQISP) shows a compositional bias: polar residues. A compositionally biased stretch (low complexity) spans 283–293 (GSAEANSGNGN). The span at 318–336 (PEPEVEPEPEPEPEPEPEP) shows a compositional bias: acidic residues. The segment covering 339–356 (ITPPSPPPKSHTPTPPSV) has biased composition (pro residues). Residues 426-439 (SPGQDNTDAMSTVS) are compositionally biased toward polar residues.

The protein belongs to the acetyltransferase ATAT1 family.

It catalyses the reaction L-lysyl-[alpha-tubulin] + acetyl-CoA = N(6)-acetyl-L-lysyl-[alpha-tubulin] + CoA + H(+). Its function is as follows. Specifically acetylates 'Lys-40' in alpha-tubulin on the lumenal side of microtubules. Promotes microtubule destabilization and accelerates microtubule dynamics; this activity may be independent of acetylation activity. Acetylates alpha-tubulin with a slow enzymatic rate, due to a catalytic site that is not optimized for acetyl transfer. Enters the microtubule through each end and diffuses quickly throughout the lumen of microtubules. Acetylates only long/old microtubules because of its slow acetylation rate since it does not have time to act on dynamically unstable microtubules before the enzyme is released. Acetylates central spindle microtubules. The polypeptide is Alpha-tubulin N-acetyltransferase 1 (Drosophila melanogaster (Fruit fly)).